A 119-amino-acid chain; its full sequence is Large ribosomal subunit protein bL20 (119 aa).

The protein belongs to the bacterial ribosomal protein bL20 family.

Binds directly to 23S ribosomal RNA and is necessary for the in vitro assembly process of the 50S ribosomal subunit. It is not involved in the protein synthesizing functions of that subunit. In Verminephrobacter eiseniae (strain EF01-2), this protein is Large ribosomal subunit protein bL20.